The sequence spans 166 residues: Crossover junction endodeoxyribonuclease RuvC (166 aa).

Residues aspartate 11, glutamate 70, and aspartate 142 contribute to the active site. Mg(2+)-binding residues include aspartate 11, glutamate 70, and aspartate 142.

The protein belongs to the RuvC family. As to quaternary structure, homodimer which binds Holliday junction (HJ) DNA. The HJ becomes 2-fold symmetrical on binding to RuvC with unstacked arms; it has a different conformation from HJ DNA in complex with RuvA. In the full resolvosome a probable DNA-RuvA(4)-RuvB(12)-RuvC(2) complex forms which resolves the HJ. It depends on Mg(2+) as a cofactor.

It localises to the cytoplasm. The catalysed reaction is Endonucleolytic cleavage at a junction such as a reciprocal single-stranded crossover between two homologous DNA duplexes (Holliday junction).. Its function is as follows. The RuvA-RuvB-RuvC complex processes Holliday junction (HJ) DNA during genetic recombination and DNA repair. Endonuclease that resolves HJ intermediates. Cleaves cruciform DNA by making single-stranded nicks across the HJ at symmetrical positions within the homologous arms, yielding a 5'-phosphate and a 3'-hydroxyl group; requires a central core of homology in the junction. The consensus cleavage sequence is 5'-(A/T)TT(C/G)-3'. Cleavage occurs on the 3'-side of the TT dinucleotide at the point of strand exchange. HJ branch migration catalyzed by RuvA-RuvB allows RuvC to scan DNA until it finds its consensus sequence, where it cleaves and resolves the cruciform DNA. This is Crossover junction endodeoxyribonuclease RuvC from Nitratidesulfovibrio vulgaris (strain DP4) (Desulfovibrio vulgaris).